The chain runs to 166 residues: UPF0336 protein ML1908 (166 aa).

It belongs to the UPF0336 family.

The polypeptide is UPF0336 protein ML1908 (Mycobacterium leprae (strain TN)).